Consider the following 637-residue polypeptide: Chaperone protein HtpG (637 aa).

Positions 1-345 (MSQQETHGFQ…SNDLPLNVSR (345 aa)) are a; substrate-binding. Positions 346-562 (EILQDNQVTT…EGEMSTQMIK (217 aa)) are b. Positions 563-637 (LMQAAGQPVP…TNQMLLASVK (75 aa)) are c.

This sequence belongs to the heat shock protein 90 family. As to quaternary structure, homodimer.

It localises to the cytoplasm. Its function is as follows. Molecular chaperone. Has ATPase activity. This is Chaperone protein HtpG from Shewanella frigidimarina (strain NCIMB 400).